Reading from the N-terminus, the 609-residue chain is Glutamine--fructose-6-phosphate aminotransferase [isomerizing] (609 aa).

Residue Cys-2 is the Nucleophile; for GATase activity of the active site. One can recognise a Glutamine amidotransferase type-2 domain in the interval 2-219; sequence CGIVAAVTQR…EGDIAIVARK (218 aa). SIS domains are found at residues 288–428 and 460–599; these read ENNI…SKKE and MANT…IDQP. Catalysis depends on Lys-604, which acts as the For Fru-6P isomerization activity.

In terms of assembly, homodimer.

The protein localises to the cytoplasm. It carries out the reaction D-fructose 6-phosphate + L-glutamine = D-glucosamine 6-phosphate + L-glutamate. Its function is as follows. Catalyzes the first step in hexosamine metabolism, converting fructose-6P into glucosamine-6P using glutamine as a nitrogen source. This is Glutamine--fructose-6-phosphate aminotransferase [isomerizing] from Buchnera aphidicola subsp. Acyrthosiphon pisum (strain APS) (Acyrthosiphon pisum symbiotic bacterium).